Consider the following 306-residue polypeptide: SDS degradation transcriptional activation protein (306 aa).

Positions 1–59 (MNDLRQLRHFVALAEHGHFARAAEAVNLSQPALSRSIQALENGLGCRLLDRGPRQVSLT) constitute an HTH lysR-type domain. Residues 19–38 (FARAAEAVNLSQPALSRSIQ) constitute a DNA-binding region (H-T-H motif).

Belongs to the LysR transcriptional regulatory family.

Activates the transcription of the sdsA gene for sodium dodecyl sulfate (SDS) degradation. The polypeptide is SDS degradation transcriptional activation protein (sdsB) (Pseudomonas sp. (strain ATCC 19151)).